Here is a 137-residue protein sequence, read N- to C-terminus: Ribosome-binding factor A (137 aa).

It belongs to the RbfA family. In terms of assembly, monomer. Binds 30S ribosomal subunits, but not 50S ribosomal subunits or 70S ribosomes.

Its subcellular location is the cytoplasm. One of several proteins that assist in the late maturation steps of the functional core of the 30S ribosomal subunit. Associates with free 30S ribosomal subunits (but not with 30S subunits that are part of 70S ribosomes or polysomes). Required for efficient processing of 16S rRNA. May interact with the 5'-terminal helix region of 16S rRNA. This chain is Ribosome-binding factor A, found in Allorhizobium ampelinum (strain ATCC BAA-846 / DSM 112012 / S4) (Agrobacterium vitis (strain S4)).